The primary structure comprises 241 residues: Large ribosomal subunit protein uL1 (241 aa).

Belongs to the universal ribosomal protein uL1 family. As to quaternary structure, part of the 50S ribosomal subunit.

Binds directly to 23S rRNA. The L1 stalk is quite mobile in the ribosome, and is involved in E site tRNA release. Functionally, protein L1 is also a translational repressor protein, it controls the translation of the L11 operon by binding to its mRNA. The polypeptide is Large ribosomal subunit protein uL1 (Thermomicrobium roseum (strain ATCC 27502 / DSM 5159 / P-2)).